We begin with the raw amino-acid sequence, 422 residues long: ATP-dependent RNA helicase RhlB (422 aa).

Residues 9-37 carry the Q motif motif; that stretch reads QKFSDFALHPLVIKAIENQGFYHCTPIQA. The Helicase ATP-binding domain occupies 40-219; it reads FPITLAGRDV…FEQMNHPEYI (180 aa). 53-60 lines the ATP pocket; it reads AQTGTGKT. Positions 165 to 168 match the DEAD box motif; it reads DEAD. The Helicase C-terminal domain maps to 245-390; the sequence is RLLQTLIEEE…TSEYNKEALL (146 aa). Residues 394 to 422 are disordered; the sequence is PQPKRLQRHHRHYAGSRNQGASRKPRSPQ. Over residues 398 to 407 the composition is skewed to basic residues; that stretch reads RLQRHHRHYA.

This sequence belongs to the DEAD box helicase family. RhlB subfamily. As to quaternary structure, component of the RNA degradosome, which is a multiprotein complex involved in RNA processing and mRNA degradation.

The protein localises to the cytoplasm. The catalysed reaction is ATP + H2O = ADP + phosphate + H(+). DEAD-box RNA helicase involved in RNA degradation. Has RNA-dependent ATPase activity and unwinds double-stranded RNA. In Hamiltonella defensa subsp. Acyrthosiphon pisum (strain 5AT), this protein is ATP-dependent RNA helicase RhlB.